A 335-amino-acid polypeptide reads, in one-letter code: Rho guanine nucleotide exchange factor 39 (335 aa).

Positions 22 to 197 (KRACTARELL…SETAQRVHTI (176 aa)) constitute a DH domain. Residues 227-331 (WFLRQGWLLV…WYHSLTLAIS (105 aa)) form the PH domain.

Its subcellular location is the cell membrane. In terms of biological role, promotes cell proliferation. This is Rho guanine nucleotide exchange factor 39 (ARHGEF39) from Bos taurus (Bovine).